A 334-amino-acid chain; its full sequence is Cathepsin J (334 aa).

An N-terminal signal peptide occupies residues 1–17; sequence MTPAVFLVILCFGVASG. The propeptide at 18–113 is activation peptide; that stretch reads APARDPNLDA…PSAQKQVSIG (96 aa). Cys138 is an active-site residue. Asn217, Asn221, and Asn268 each carry an N-linked (GlcNAc...) asparagine glycan. Cys269 and Cys322 are joined by a disulfide. His276 is an active-site residue. N-linked (GlcNAc...) asparagine glycosylation is present at Asn288. Asn300 is an active-site residue.

The protein belongs to the peptidase C1 family. Expressed specifically in placenta.

Its subcellular location is the lysosome. The sequence is that of Cathepsin J (Ctsj) from Rattus norvegicus (Rat).